A 379-amino-acid polypeptide reads, in one-letter code: Muconate cycloisomerase 1-1 (379 aa).

Residue Lys169 is part of the active site. Asp198, Glu224, and Asp247 together coordinate Mn(2+).

Belongs to the mandelate racemase/muconate lactonizing enzyme family. As to quaternary structure, homooctamer. Mn(2+) is required as a cofactor.

The enzyme catalyses (S)-muconolactone = cis,cis-muconate + H(+). It participates in aromatic compound metabolism; beta-ketoadipate pathway; 5-oxo-4,5-dihydro-2-furylacetate from catechol: step 2/3. In terms of biological role, catalyzes a syn cycloisomerization. This Acinetobacter lwoffii protein is Muconate cycloisomerase 1-1 (catB1).